Here is a 446-residue protein sequence, read N- to C-terminus: Citrate/sodium symporter (446 aa).

5 consecutive transmembrane segments (helical) span residues 23–43 (IFGMPLPLYAFALITLLLSHF), 46–66 (AIPTDLVGGFALMFVMGAIFG), 79–99 (IGGAPVMIFLVAAYFVYAGIF), 110–130 (VMDKSNFLNLFIAVLITGAIL), and 148–168 (ILAGIVGASLFGIVIGLCFGI). Residues Ile-181 and Gly-183 each coordinate Na(+). Residues Asn-186 and Gly-187 each contribute to the citrate site. Transmembrane regions (helical) follow at residues 213–233 (IAILTIANIFAIIFAALLDMI), 267–287 (ETAVGMVLSTTCFLLAYVVAK), 289–309 (ILPSIGGVSIHYFAWMVLIVA), 335–355 (QLLWVLMVGVGVCYTDLQEII), and 364–384 (VIAAIIVVGAVVGAAIGGWLI). Residues Met-399 and Asn-401 each contribute to the Na(+) site. Citrate is bound by residues Arg-402, Gly-404, Ser-405, and Arg-428. A helical transmembrane segment spans residues 425 to 445 (ISSRLGGGIVLVIASIVFSMM).

Belongs to the 2-hydroxycarboxylate transporter (2-HCT) (TC 2.A.24) family. As to quaternary structure, homodimer.

Its subcellular location is the cell inner membrane. The catalysed reaction is citrate(out) + 2 Na(+)(out) = citrate(in) + 2 Na(+)(in). Functionally, secondary active transporter that catalyzes the uptake of citrate across the membrane with the concomitant uptake of sodium. Is specific for citrate. This chain is Citrate/sodium symporter, found in Salmonella pullorum.